Reading from the N-terminus, the 816-residue chain is MKIKIGNILKNVVILVIFSLFISKINSEVVKPNPAKPDELVIAFMSPYFDPEYTQYSGAAEYALSKFNETFKTKYSKTIKLHTFTDTNDVIDSLDLVTMPVNGIVGPAYSGSSSTACLVFGAFAVPSISFYATGASLSNSGSYPYFQRVMPDDRLQVQAILSLLKKNGWTRVSCIHTNEDYGNGGADQLVQQSNAQGITVNTNQAIDPVDNGIAPEQLYYDIVFDNLEAAKSRVIVLYALFPPDCLEIWKQAKARGFLGEGFTWIVTDGCAELTGGTDPDLLGVLATFPSYGLGTEAYTDFERTIVNDYNNNTGDAFYKGASFSYDATYAMLMGIEAVLAKGGDPWDGEQVRTELRNLKFNGITGTIAFDKNTGDRLYGEFALLNLINSTKGSFDPIGKINPDSGEITLKSDILYSGPTYKVPSDYQVVVFDRTLNIVLGVITGVCVLIVIGIGSVIALQWRKFRYSSPLFCMFIIIGALMGLASVFTLLPTPTTPLCSGFPWLLGLGYVIVFGTLFTKTWRTWRLFSNARKFKIIRITNKFIITLVGGFVLLESIFMIIWTAVDRPIPLAEPIFKAGEAQLQCTSDSEAWWYVFVFYKVFYILFGVFLAFKTRNVVDSLNESKPITLALYNLTFVMVVAIALGFILRDNPIAIIVIQTIAILLGFTVTVSVLFLPKVWMILSGQQHSMDSIGTSMDSMGRSNGNTTEAESTRGYTNKDYNNQSVGRSFSAHATGFKDVAPSNHPQLGIVYTGGDNFPRVGSSQTAASRSEAEINVSKDVLAKANKKNEEEFGEFFLKPSEDNILKKKKKKKNNNK.

A signal peptide spans M1–S27. Topologically, residues E28–N436 are extracellular. Residues N68, N311, and N388 are each glycosylated (N-linked (GlcNAc...) asparagine). Residues I437–I457 traverse the membrane as a helical segment. The Cytoplasmic segment spans residues A458–P469. The chain crosses the membrane as a helical span at residues L470–L490. Residues P491–P496 lie on the Extracellular side of the membrane. Residues L497–F517 traverse the membrane as a helical segment. Residues T518–K541 lie on the Cytoplasmic side of the membrane. The chain crosses the membrane as a helical span at residues F542–T562. At A563–A590 the chain is on the extracellular side. A helical membrane pass occupies residues W591 to F611. Residues K612–P625 are Cytoplasmic-facing. Residues I626–I646 form a helical membrane-spanning segment. The Extracellular segment spans residues L647 to A653. Residues I654–F674 form a helical membrane-spanning segment. Over L675 to K816 the chain is Cytoplasmic. The disordered stretch occupies residues D697 to K718.

This sequence belongs to the G-protein coupled receptor 3 family.

The protein localises to the membrane. In terms of biological role, may be involved in early development in cAMP sensing and subsequent chemotactic response. Probable receptor of GABA and glutamate, leading respectively to the induction or inhibition of SDF-2 formation. The polypeptide is Metabotropic glutamate receptor-like protein E (grlE) (Dictyostelium discoideum (Social amoeba)).